Consider the following 166-residue polypeptide: Large ribosomal subunit protein uL10 (166 aa).

Belongs to the universal ribosomal protein uL10 family. Part of the ribosomal stalk of the 50S ribosomal subunit. The N-terminus interacts with L11 and the large rRNA to form the base of the stalk. The C-terminus forms an elongated spine to which L12 dimers bind in a sequential fashion forming a multimeric L10(L12)X complex.

Functionally, forms part of the ribosomal stalk, playing a central role in the interaction of the ribosome with GTP-bound translation factors. The polypeptide is Large ribosomal subunit protein uL10 (Shouchella clausii (strain KSM-K16) (Alkalihalobacillus clausii)).